The chain runs to 185 residues: Ribosome-recycling factor (185 aa).

Residues 135 to 159 (ANDKLKASEKNKEASEDEVKRAQEK) form a disordered region.

Belongs to the RRF family.

Its subcellular location is the cytoplasm. Functionally, responsible for the release of ribosomes from messenger RNA at the termination of protein biosynthesis. May increase the efficiency of translation by recycling ribosomes from one round of translation to another. The sequence is that of Ribosome-recycling factor from Moorella thermoacetica (strain ATCC 39073 / JCM 9320).